Reading from the N-terminus, the 578-residue chain is Sulfite reductase [NADPH] hemoprotein beta-component (578 aa).

Positions 441, 447, 487, and 491 each coordinate [4Fe-4S] cluster. Residue cysteine 491 coordinates siroheme.

It belongs to the nitrite and sulfite reductase 4Fe-4S domain family. Alpha(8)-beta(8). The alpha component is a flavoprotein, the beta component is a hemoprotein. It depends on siroheme as a cofactor. Requires [4Fe-4S] cluster as cofactor.

It catalyses the reaction hydrogen sulfide + 3 NADP(+) + 3 H2O = sulfite + 3 NADPH + 4 H(+). It functions in the pathway sulfur metabolism; hydrogen sulfide biosynthesis; hydrogen sulfide from sulfite (NADPH route): step 1/1. In terms of biological role, component of the sulfite reductase complex that catalyzes the 6-electron reduction of sulfite to sulfide. This is one of several activities required for the biosynthesis of L-cysteine from sulfate. The sequence is that of Sulfite reductase [NADPH] hemoprotein beta-component from Vibrio parahaemolyticus serotype O3:K6 (strain RIMD 2210633).